The primary structure comprises 115 residues: Tyrosine-protein phosphatase 21 (115 aa).

Positions 1-115 constitute a Tyrosine-protein phosphatase domain; that stretch reads WLMIVEKECR…EIGGDAPMVV (115 aa). A substrate-binding site is contributed by D83.

This sequence belongs to the protein-tyrosine phosphatase family.

The enzyme catalyses O-phospho-L-tyrosyl-[protein] + H2O = L-tyrosyl-[protein] + phosphate. This is Tyrosine-protein phosphatase 21 (STY-21) from Styela plicata (Wrinkled sea squirt).